We begin with the raw amino-acid sequence, 335 residues long: Interleukin-12 subunit beta (335 aa).

A signal peptide spans 1–22; the sequence is MCPQKLTISWFAIVLLVSPLMA. Residues 23–106 enclose the Ig-like C2-type domain; sequence MWELEKDVYV…LSHSHLLLHK (84 aa). Asparagine 47 is a glycosylation site (N-linked (GlcNAc...) asparagine). A disulfide bridge links cysteine 50 with cysteine 90. N-linked (GlcNAc...) asparagine glycosylation is found at asparagine 122, asparagine 132, and asparagine 220. A Fibronectin type-III domain is found at 233-324; that stretch reads PDPPKNLQMK…QDRYYNSSCS (92 aa).

The protein belongs to the IL-12B family. In terms of assembly, heterodimer with IL12A; disulfide-linked. The heterodimer is known as interleukin IL-12. Heterodimer with IL23A; disulfide-linked. The heterodimer is known as interleukin IL-23. Also secreted as a monomer. Interacts with NBR1; this interaction promotes IL-12 secretion.

The protein localises to the secreted. In terms of biological role, cytokine that can act as a growth factor for activated T and NK cells, enhance the lytic activity of NK/lymphokine-activated killer cells, and stimulate the production of IFN-gamma by resting PBMC. Associates with IL23A to form the IL-23 interleukin, a heterodimeric cytokine which functions in innate and adaptive immunity. IL-23 may constitute with IL-17 an acute response to infection in peripheral tissues. IL-23 binds to a heterodimeric receptor complex composed of IL12RB1 and IL23R, activates the Jak-Stat signaling cascade, stimulates memory rather than naive T-cells and promotes production of pro-inflammatory cytokines. IL-23 induces autoimmune inflammation and thus may be responsible for autoimmune inflammatory diseases and may be important for tumorigenesis. The sequence is that of Interleukin-12 subunit beta (Il12b) from Mus musculus (Mouse).